The following is a 421-amino-acid chain: MAYYLNSEAHLDPGPIYVRENGQLHMVNLALDGVKNSLQKPRPFRLFPKGFSVELCMNREDDTAQKEKTDHFIFTYTREGNLRYSAKSLFSLVLGFISDNVDHIDSLIGFPEQIAEKLFSAAEARQKFTEPGAGLRALQKFTEAYGSLVLCSLCLRNRYLVVAEKLEEIKSFRELTRLDLSCCWLGDEHELLEHLTNEALSSVTQLHLKDNCLSDAGIRKMTAPVRVMKRGLENLALLDLSCNPEITDAGIGYLFSFRKLNCLDISGTGLKDIKAVKDKLRANIGLVHSKVPLKEFDHSNCKTEGWADQIVLQWERVSVEAVRQRKDVEPRKAAQYFYQNRARTEVTRKCPLAETHMNSSGKLQFYREEAPDCHEPLLSQESKKSKKRAFKESEQEQSSPQSAKQKCVCLAVEDWDLLNSY.

5 LRR repeats span residues 149–170 (VLCSLCLRNRYLVVAEKLEEIK), 174–195 (ELTRLDLSCCWLGDEHELLEHL), 202–222 (SVTQLHLKDNCLSDAGIRKMT), 234–255 (NLALLDLSCNPEITDAGIGYLF), and 259–280 (KLNCLDISGTGLKDIKAVKDKL). The interval 376–406 (PLLSQESKKSKKRAFKESEQEQSSPQSAKQK) is disordered. The segment covering 396 to 406 (EQSSPQSAKQK) has biased composition (low complexity). At serine 399 the chain carries Phosphoserine.

It belongs to the LRRC42 family.

The sequence is that of Leucine-rich repeat-containing protein 42 (Lrrc42) from Mus musculus (Mouse).